Reading from the N-terminus, the 367-residue chain is B2 bradykinin receptor (367 aa).

At Met1–Gln36 the chain is on the extracellular side. Residues Asn3 and Asn14 are each glycosylated (N-linked (GlcNAc...) asparagine). A helical transmembrane segment spans residues Ala37–Leu60. Over His61–Glu69 the chain is Cytoplasmic. The chain crosses the membrane as a helical span at residues Val70–Ala94. Residues Asn95–Arg107 lie on the Extracellular side of the membrane. Residues Cys106 and Cys187 are joined by a disulfide bond. A helical transmembrane segment spans residues Val108–Ile129. Over Asp130–Lys151 the chain is Cytoplasmic. Residue Tyr132 is modified to Phosphotyrosine. A helical membrane pass occupies residues Leu152–Met174. The Extracellular portion of the chain corresponds to Lys175–Glu197. Asn183 carries N-linked (GlcNAc...) asparagine glycosylation. Residues Val198–Leu224 form a helical membrane-spanning segment. Topologically, residues Gln225–Arg243 are cytoplasmic. The chain crosses the membrane as a helical span at residues Ala244–Leu268. Residues Asp269–Asp287 lie on the Extracellular side of the membrane. The chain crosses the membrane as a helical span at residues Val288–Val311. Residues Gly312–Gln367 lie on the Cytoplasmic side of the membrane. Tyr323 carries the phosphotyrosine modification. Residue Cys327 is the site of S-palmitoyl cysteine attachment. Ser342 is modified (phosphoserine). Thr345 bears the Phosphothreonine mark. Phosphoserine; by GRK6 occurs at positions 349 and 351.

Belongs to the G-protein coupled receptor 1 family. Bradykinin receptor subfamily. BDKRB2 sub-subfamily. As to quaternary structure, forms a complex with PECAM1 and GNAQ. Interacts with PECAM1.

Its subcellular location is the cell membrane. Receptor for bradykinin. It is associated with G proteins that activate a phosphatidylinositol-calcium second messenger system. The protein is B2 bradykinin receptor (BDKRB2) of Oryctolagus cuniculus (Rabbit).